A 333-amino-acid polypeptide reads, in one-letter code: tRNA N6-adenosine threonylcarbamoyltransferase (333 aa).

Residues H111 and H115 each coordinate Fe cation. Substrate-binding positions include 134–138 (LVSGG), D167, G180, and N272. Fe cation is bound at residue D300.

The protein belongs to the KAE1 / TsaD family. Fe(2+) is required as a cofactor.

It is found in the cytoplasm. The enzyme catalyses L-threonylcarbamoyladenylate + adenosine(37) in tRNA = N(6)-L-threonylcarbamoyladenosine(37) in tRNA + AMP + H(+). In terms of biological role, required for the formation of a threonylcarbamoyl group on adenosine at position 37 (t(6)A37) in tRNAs that read codons beginning with adenine. Is involved in the transfer of the threonylcarbamoyl moiety of threonylcarbamoyl-AMP (TC-AMP) to the N6 group of A37, together with TsaE and TsaB. TsaD likely plays a direct catalytic role in this reaction. This is tRNA N6-adenosine threonylcarbamoyltransferase from Legionella pneumophila subsp. pneumophila (strain Philadelphia 1 / ATCC 33152 / DSM 7513).